Reading from the N-terminus, the 189-residue chain is Peptidyl-tRNA hydrolase (189 aa).

Tyrosine 15 contacts tRNA. Catalysis depends on histidine 20, which acts as the Proton acceptor. TRNA-binding residues include tyrosine 67, asparagine 69, and asparagine 115.

This sequence belongs to the PTH family. Monomer.

It localises to the cytoplasm. It carries out the reaction an N-acyl-L-alpha-aminoacyl-tRNA + H2O = an N-acyl-L-amino acid + a tRNA + H(+). Hydrolyzes ribosome-free peptidyl-tRNAs (with 1 or more amino acids incorporated), which drop off the ribosome during protein synthesis, or as a result of ribosome stalling. In terms of biological role, catalyzes the release of premature peptidyl moieties from peptidyl-tRNA molecules trapped in stalled 50S ribosomal subunits, and thus maintains levels of free tRNAs and 50S ribosomes. The sequence is that of Peptidyl-tRNA hydrolase from Symbiobacterium thermophilum (strain DSM 24528 / JCM 14929 / IAM 14863 / T).